Consider the following 156-residue polypeptide: Protein LlR18B (156 aa).

Trans-zeatin is bound by residues aspartate 8 and aspartate 28. Ca(2+) contacts are provided by proline 32 and isoleucine 38. Residues lysine 54, glutamate 133, and lysine 136 each contribute to the trans-zeatin site.

It belongs to the BetVI family. In terms of tissue distribution, ubiquitous, with higher levels in roots.

The protein localises to the cytoplasm. It is found in the cytosol. Class II ribonuclease (RNase), with low activity on single-strand RNA. Binds to cytokinins. Interacts with melatonin. The chain is Protein LlR18B (LLR18B) from Lupinus luteus (European yellow lupine).